A 101-amino-acid polypeptide reads, in one-letter code: Protein SSXA1 (101 aa).

The KRAB-related domain occupies 19–83 (ETCQAFEDIS…ERVTKSVLSD (65 aa)). The segment at 73-101 (KERVTKSVLSDSDEVSSHESQDKRKNPVV) is disordered. Residues 87–101 (VSSHESQDKRKNPVV) are compositionally biased toward basic and acidic residues.

It belongs to the SSX family. In terms of tissue distribution, specifically expressed in testis (at protein level). Not detected in other tissues tested (at protein level).

It is found in the nucleus. In terms of biological role, could act as a modulator of transcription. In Mus musculus (Mouse), this protein is Protein SSXA1.